Here is a 152-residue protein sequence, read N- to C-terminus: Mitochondrial fission 1 protein (152 aa).

Methionine 1 carries the post-translational modification N-acetylmethionine. Topologically, residues 1–122 are cytoplasmic; that stretch reads MEAVLNELVS…LIDKAMKKDG (122 aa). Serine 10 is modified (phosphoserine). Residues 71-104 form a TPR repeat; it reads RDYVFYLAVGNYRLKEYEKALKYVRGLLQTEPQN. The chain crosses the membrane as a helical span at residues 123–143; sequence LVGMAIVGGMALGVAGLAGLI. Over 144-152 the chain is Mitochondrial intermembrane; sequence GLAVSKSKS.

The protein belongs to the FIS1 family. In terms of assembly, interacts with DNM1L/DLP1 through the TPR region; may form part of a larger protein complex at the endoplasmic reticulum-mitochondrial interface during mitochondrial fission. Interacts with MARCHF5. Interacts with MIEF1. Interacts with PEX11A, PEX11B and PEX11G. Post-translationally, ubiquitinated by MARCHF5.

It is found in the mitochondrion outer membrane. Its subcellular location is the peroxisome membrane. Functionally, involved in the fragmentation of the mitochondrial network and its perinuclear clustering. Plays a minor role in the recruitment and association of the fission mediator dynamin-related protein 1 (DNM1L) to the mitochondrial surface and mitochondrial fission. May not be essential for the assembly of functional fission complexes and the subsequent membrane scission event. Also mediates peroxisomal fission. May act when the products of fission are directed toward mitochondrial homeostasis, mitophagy, or apoptosis. Can induce cytochrome c release from the mitochondrion to the cytosol, ultimately leading to apoptosis. The chain is Mitochondrial fission 1 protein from Rattus norvegicus (Rat).